The following is an 896-amino-acid chain: Desmocollin-3 (896 aa).

The signal sequence occupies residues 1-27; it reads MAAAGPRRSVRGAVCLHLLLTLVIFSR. Residues 28-135 constitute a propeptide that is removed on maturation; it reads AGEACKKVIL…RETVLRRAKR (108 aa). Cadherin domains lie at 136–243, 244–355, 356–471, 472–579, and 580–690; these read RWAP…HPVF, TEAI…APTF, RQNA…GPEC, TPAA…EILQ, and EYVV…ILGK. At 136-690 the chain is on the extracellular side; the sequence is RWAPIPCSMQ…SRSTGVILGK (555 aa). The N-linked (GlcNAc...) asparagine glycan is linked to Asn166. Asn392, Asn546, and Asn629 each carry an N-linked (GlcNAc...) asparagine glycan. Residues 691–711 form a helical membrane-spanning segment; the sequence is WAILAILLGIALLFSVLLTLV. Residues 712-896 lie on the Cytoplasmic side of the membrane; the sequence is CGVFGATKGK…ITLAEACTKR (185 aa).

As to quaternary structure, may form homodimers. Interacts with DSG1; there is evidence to suggest that the interaction promotes cell-cell adhesion of keratinocytes. In terms of tissue distribution, expressed throughout the basal and spinous layer of the epidermis with weak expression in the granular layer (at protein level). Also expressed in the buccal mucosa, esophagus and cervix (at protein level).

The protein localises to the cell membrane. Its subcellular location is the cell junction. The protein resides in the desmosome. It is found in the cytoplasm. In terms of biological role, a component of desmosome cell-cell junctions which are required for positive regulation of cellular adhesion. Required for cell-cell adhesion in the epidermis, as a result required for the maintenance of the dermal cohesion and the dermal barrier function. Required for cell-cell adhesion of epithelial cell layers surrounding the telogen hair club, as a result plays an important role in telogen hair shaft anchorage. Essential for successful completion of embryo compaction and embryo development. The sequence is that of Desmocollin-3 (DSC3) from Homo sapiens (Human).